The following is a 419-amino-acid chain: Serine hydroxymethyltransferase (419 aa).

(6S)-5,6,7,8-tetrahydrofolate contacts are provided by residues Leu121 and 125–127 (GHL). Lys229 carries the N6-(pyridoxal phosphate)lysine modification.

Belongs to the SHMT family. As to quaternary structure, homodimer. It depends on pyridoxal 5'-phosphate as a cofactor.

The protein localises to the cytoplasm. It catalyses the reaction (6R)-5,10-methylene-5,6,7,8-tetrahydrofolate + glycine + H2O = (6S)-5,6,7,8-tetrahydrofolate + L-serine. The protein operates within one-carbon metabolism; tetrahydrofolate interconversion. It participates in amino-acid biosynthesis; glycine biosynthesis; glycine from L-serine: step 1/1. Its function is as follows. Catalyzes the reversible interconversion of serine and glycine with tetrahydrofolate (THF) serving as the one-carbon carrier. This reaction serves as the major source of one-carbon groups required for the biosynthesis of purines, thymidylate, methionine, and other important biomolecules. Also exhibits THF-independent aldolase activity toward beta-hydroxyamino acids, producing glycine and aldehydes, via a retro-aldol mechanism. The sequence is that of Serine hydroxymethyltransferase from Histophilus somni (strain 2336) (Haemophilus somnus).